Reading from the N-terminus, the 519-residue chain is Chaperone SurA (519 aa).

The N-terminal stretch at 1–31 (MMRSLHSLRRMSGTVLALMLAAGLPLSAAQA) is a signal peptide. Low complexity-rich tracts occupy residues 31–45 (AQPAKPAPKGDQKPA) and 197–207 (PAAAQATRAPA). 2 disordered regions span residues 31 to 50 (AQPAKPAPKGDQKPATPAPS) and 196 to 221 (NPAAAQATRAPAPQQPQPQPRQPAQS). In terms of domain architecture, PpiC 1 spans 223–324 (PAMLVLAQIL…NGFHILKVVD (102 aa)). Residues 328–361 (GGQPAQAARPAPAPAPQQPSSFQEGPSVAAPQGP) form a disordered region. The 100-residue stretch at 364–463 (VTQTHARHIL…FGWHLIQVLE (100 aa)) folds into the PpiC 2 domain.

It localises to the periplasm. It carries out the reaction [protein]-peptidylproline (omega=180) = [protein]-peptidylproline (omega=0). Functionally, chaperone involved in the correct folding and assembly of outer membrane proteins. Recognizes specific patterns of aromatic residues and the orientation of their side chains, which are found more frequently in integral outer membrane proteins. May act in both early periplasmic and late outer membrane-associated steps of protein maturation. This chain is Chaperone SurA, found in Bordetella pertussis (strain Tohama I / ATCC BAA-589 / NCTC 13251).